Here is a 235-residue protein sequence, read N- to C-terminus: UPF0714 protein YmaC (235 aa).

A helical membrane pass occupies residues leucine 5–serine 24.

This sequence belongs to the UPF0714 family.

Its subcellular location is the cell membrane. The polypeptide is UPF0714 protein YmaC (ymaC) (Bacillus subtilis (strain 168)).